We begin with the raw amino-acid sequence, 298 residues long: HTH-type transcriptional regulator ArgP (298 aa).

Positions L4 to T60 constitute an HTH lysR-type domain. The segment at residues F21–K40 is a DNA-binding region (H-T-H motif).

This sequence belongs to the LysR transcriptional regulatory family. As to quaternary structure, homodimer.

Its function is as follows. Controls the transcription of genes involved in arginine and lysine metabolism. In Vibrio cholerae serotype O1 (strain ATCC 39541 / Classical Ogawa 395 / O395), this protein is HTH-type transcriptional regulator ArgP.